Here is a 477-residue protein sequence, read N- to C-terminus: Solute carrier family 2, facilitated glucose transporter member 8 (477 aa).

Residues 1 to 25 are Cytoplasmic-facing; it reads MSPEDPQETQPLLRPPEARTPRGRR. The Dileucine internalization motif motif lies at 12 to 13; sequence LL. Residues 26 to 46 traverse the membrane as a helical segment; it reads VFLASFAAALGPLSFGFALGY. Topologically, residues 47–70 are extracellular; it reads SSPAIPSLRRTAPPALRLGDNAAS. The chain crosses the membrane as a helical span at residues 71–91; sequence WFGAVVTLGAAAGGILGGWLL. The Cytoplasmic segment spans residues 92 to 96; the sequence is DRAGR. A helical transmembrane segment spans residues 97–117; sequence KLSLLLCTVPFVTGFAVITAA. The Extracellular portion of the chain corresponds to 118–127; sequence RDVWMLLGGR. The chain crosses the membrane as a helical span at residues 128-148; sequence LLTGLACGVASLVAPVYISEI. Residues 149-156 are Cytoplasmic-facing; the sequence is AYPAVRGL. A helical transmembrane segment spans residues 157-177; the sequence is LGSCVQLMVVTGILLAYVAGW. Gln-162 is a binding site for D-glucose. At 178–182 the chain is on the extracellular side; it reads VLEWR. A helical transmembrane segment spans residues 183 to 203; it reads WLAVLGCVPPTLMLLLMCYMP. The Cytoplasmic portion of the chain corresponds to 204-257; that stretch reads ETPRFLLTQHQYQEAMAALRFLWGSEEGWEEPPVGAEHQGFQLALLRRPGIYKP. A helical transmembrane segment spans residues 258–278; that stretch reads LIIGISLMVFQQLSGVNAIMF. D-glucose-binding positions include 268 to 269 and Asn-274; that span reads QQ. Over 279-293 the chain is Extracellular; sequence YANSIFEEAKFKDSS. Residues 294-314 traverse the membrane as a helical segment; the sequence is LASVTVGIIQVLFTAVAALIM. The Cytoplasmic portion of the chain corresponds to 315-320; it reads DRAGRR. A helical membrane pass occupies residues 321–341; sequence LLLALSGVIMVFSMSAFGTYF. Residues 342–367 lie on the Extracellular side of the membrane; the sequence is KLTQSLPSNSSHVGLVPIAAEPVDVQ. Asn-350 is a glycosylation site (N-linked (GlcNAc...) asparagine). A helical membrane pass occupies residues 368–388; it reads VGLAWLAVGSMCLFIAGFAVG. The Cytoplasmic portion of the chain corresponds to 389–404; that stretch reads WGPIPWLLMSEIFPLH. Position 394 (Trp-394) interacts with D-glucose. A helical membrane pass occupies residues 405–425; the sequence is VKGVATGICVLTNWFMAFLVT. Topologically, residues 426–438 are extracellular; the sequence is KEFSSVMEMLRPY. Residues 439 to 459 traverse the membrane as a helical segment; the sequence is GAFWLTAAFCALSVLFTLTVV. The Cytoplasmic segment spans residues 460–477; the sequence is PETKGRTLEQVTAHFEGR.

It belongs to the major facilitator superfamily. Sugar transporter (TC 2.A.1.1) family. Glucose transporter subfamily. As to quaternary structure, interacts with AP2B1. Also able to mediate the transport of dehydroascorbate. Highest level of expression in placenta and testis. Highly expressed in adult and pubertal testis, but not prepubertal testis. Lower levels of expression in brain, liver, heart, kidney, fat and skeletal muscle.

It localises to the cell membrane. It is found in the cytoplasmic vesicle membrane. The enzyme catalyses D-glucose(out) = D-glucose(in). The catalysed reaction is D-fructose(out) = D-fructose(in). It catalyses the reaction L-dehydroascorbate(out) = L-dehydroascorbate(in). It carries out the reaction alpha,alpha-trehalose(in) = alpha,alpha-trehalose(out). Its activity is regulated as follows. Inhibited by cytochalasin B. In terms of biological role, insulin-regulated facilitative hexose transporter that mediates the transport of glucose and fructose. Facilitates hepatic influx of dietary trehalose, which in turn inhibits glucose and fructose influx triggering a starvation signal and hepatic autophagy through activation of AMPK and ULK1. Also able to mediate the transport of dehydroascorbate. The protein is Solute carrier family 2, facilitated glucose transporter member 8 of Mus musculus (Mouse).